The following is a 430-amino-acid chain: Serine hydroxymethyltransferase (430 aa).

120-122 (GHI) is a binding site for (6S)-5,6,7,8-tetrahydrofolate. Lys-226 is subject to N6-(pyridoxal phosphate)lysine.

This sequence belongs to the SHMT family. As to quaternary structure, homodimer. Pyridoxal 5'-phosphate is required as a cofactor.

The protein resides in the cytoplasm. It participates in amino-acid biosynthesis; glycine biosynthesis; glycine from L-serine: step 1/1. Its function is as follows. Catalyzes the reversible interconversion of serine and glycine with a modified folate serving as the one-carbon carrier. Also exhibits a pteridine-independent aldolase activity toward beta-hydroxyamino acids, producing glycine and aldehydes, via a retro-aldol mechanism. The polypeptide is Serine hydroxymethyltransferase (Pyrobaculum calidifontis (strain DSM 21063 / JCM 11548 / VA1)).